We begin with the raw amino-acid sequence, 330 residues long: Ribose-phosphate pyrophosphokinase (330 aa).

ATP contacts are provided by residues 40-42 (DGE) and 99-100 (RQ). Histidine 133 and aspartate 174 together coordinate Mg(2+). Lysine 197 is a catalytic residue. D-ribose 5-phosphate is bound by residues arginine 199, aspartate 223, and 227–231 (DTGGT).

Belongs to the ribose-phosphate pyrophosphokinase family. Class I subfamily. Homohexamer. Mg(2+) serves as cofactor.

It is found in the cytoplasm. It carries out the reaction D-ribose 5-phosphate + ATP = 5-phospho-alpha-D-ribose 1-diphosphate + AMP + H(+). It functions in the pathway metabolic intermediate biosynthesis; 5-phospho-alpha-D-ribose 1-diphosphate biosynthesis; 5-phospho-alpha-D-ribose 1-diphosphate from D-ribose 5-phosphate (route I): step 1/1. Its function is as follows. Involved in the biosynthesis of the central metabolite phospho-alpha-D-ribosyl-1-pyrophosphate (PRPP) via the transfer of pyrophosphoryl group from ATP to 1-hydroxyl of ribose-5-phosphate (Rib-5-P). The protein is Ribose-phosphate pyrophosphokinase of Ureaplasma parvum serovar 3 (strain ATCC 700970).